The sequence spans 1167 residues: Tight junction protein 2 (1167 aa).

One can recognise a PDZ 1 domain in the interval threonine 10–arginine 97. 10 positions are modified to phosphoserine: serine 107, serine 127, serine 130, serine 140, serine 145, serine 147, serine 173, serine 194, serine 205, and serine 239. The tract at residues arginine 129–leucine 195 is disordered. Residues serine 225–isoleucine 286 form a disordered region. The span at tyrosine 242–arginine 262 shows a compositional bias: basic and acidic residues. Residues glycine 287–serine 365 enclose the PDZ 2 domain. 8 positions are modified to phosphoserine: serine 305, serine 378, serine 380, serine 386, serine 395, serine 404, serine 410, and serine 411. Residues glutamate 381–isoleucine 485 are disordered. The span at serine 395–serine 426 shows a compositional bias: basic and acidic residues. The residue at position 435 (threonine 435) is a Phosphothreonine. Serine 479 is subject to Phosphoserine. Positions asparagine 489–serine 570 constitute a PDZ 3 domain. Tyrosine 554 carries the post-translational modification Phosphotyrosine. One can recognise an SH3 domain in the interval glycine 584–alanine 649. The 199-residue stretch at glycine 660–glutamine 858 folds into the Guanylate kinase-like domain. Phosphoserine is present on residues serine 684 and serine 884. Phosphothreonine is present on threonine 887. Phosphoserine occurs at positions 895 and 902. 2 disordered regions span residues phenylalanine 904–valine 1055 and tyrosine 1095–leucine 1167. Phosphothreonine is present on residues threonine 907 and threonine 915. The span at valine 938 to proline 949 shows a compositional bias: basic and acidic residues. A phosphoserine mark is found at serine 948, serine 960, serine 968, serine 988, and serine 1044. Positions glutamate 976 to aspartate 990 are enriched in basic and acidic residues. The span at glutamate 1037–glutamate 1049 shows a compositional bias: acidic residues. Tyrosine 1095 is modified (phosphotyrosine). A phosphoserine mark is found at serine 1124 and serine 1136. Positions threonine 1165–leucine 1167 are interaction with SCRIB.

The protein belongs to the MAGUK family. In terms of assembly, homodimer. Interacts (via PDZ2 domain) with TJP1/ZO1 (via PDZ2 domain). Interacts with UBN1. Interacts with SCRIB. Interacts with OCLN. Interacts with SAFB in the nucleus. Interacts with USP53 (via the C-terminal region). Interacts with claudins, including CLDN1, CLDN2, CLDN3, CLDN5 and CLDN7. Interacts with CLDN18. Interacts (via N-terminus) with CTNNA1.

Its subcellular location is the cell junction. It is found in the adherens junction. The protein localises to the cell membrane. It localises to the nucleus. The protein resides in the tight junction. In terms of biological role, plays a role in tight junctions and adherens junctions. Acts as a positive regulator of RANKL-induced osteoclast differentiation, potentially via mediating downstream transcriptional activity. In Mus musculus (Mouse), this protein is Tight junction protein 2.